The sequence spans 258 residues: Zinc import ATP-binding protein ZnuC (258 aa).

Residues 7–233 (ITAKNINHAY…PAFQELFGQG (227 aa)) enclose the ABC transporter domain. 39–46 (GPNGAGKS) serves as a coordination point for ATP.

It belongs to the ABC transporter superfamily. Zinc importer (TC 3.A.1.15.5) family. The complex is composed of two ATP-binding proteins (ZnuC), two transmembrane proteins (ZnuB) and a solute-binding protein (ZnuA).

Its subcellular location is the cell inner membrane. It catalyses the reaction Zn(2+)(out) + ATP(in) + H2O(in) = Zn(2+)(in) + ADP(in) + phosphate(in) + H(+)(in). In terms of biological role, part of the ABC transporter complex ZnuABC involved in zinc import. Responsible for energy coupling to the transport system. The protein is Zinc import ATP-binding protein ZnuC of Hydrogenovibrio crunogenus (strain DSM 25203 / XCL-2) (Thiomicrospira crunogena).